Reading from the N-terminus, the 491-residue chain is Conidiogenone synthase PchP450 (491 aa).

A helical transmembrane segment spans residues 2–22 (LLLWFGFFSFVCGLVIYRLQF). Heme is bound at residue cysteine 430.

This sequence belongs to the cytochrome P450 family. Heme is required as a cofactor.

Its subcellular location is the membrane. It functions in the pathway secondary metabolite biosynthesis; terpenoid biosynthesis. Cytochrome P450 monooxygenase; part of the gene cluster that mediates the biosynthesis of conidiogenone, a diterpene known to induce the conidiation. The bifunctional terpene synthase PrDS converts isopentenyl diphosphate (IPP) and dimethylallyl diphosphate (DMAPP) into deoxyconidiogenol. The C-terminal prenyltransferase (PT) domain of PrDS catalyzes formation of GGPP, whereas the N-terminal terpene cyclase (TC) domain catalyzes the cyclization of GGPP into deoxyconidiogenol. The cytochrome P450 monooxygenase PrP450 then catalyzes two rounds of oxidation to furnish conidiogenone. This is Conidiogenone synthase PchP450 from Penicillium rubens (strain ATCC 28089 / DSM 1075 / NRRL 1951 / Wisconsin 54-1255) (Penicillium chrysogenum).